The chain runs to 588 residues: Probable fumarate reductase Ifc3 (588 aa).

The first 22 residues, 1-22 (MKLKYLVSAMALVVLSSGTAMA), serve as a signal peptide directing secretion. Positions 31, 37, 40, 41, 58, 61, 62, 78, 81, 87, 90, 91, 93, 94, 101, 104, and 105 each coordinate heme c. The flavoprotein-like stretch occupies residues 135-588 (AIAAGPSETT…DNAAKHALDK (454 aa)). Residues A154, D173, N181, S182, G187, and G188 each coordinate FAD. G187 serves as a coordination point for fumarate. G187 is a succinate binding site. R218 provides a ligand contact to heme c. Positions 295 and 361 each coordinate FAD. Succinate contacts are provided by H382, S394, and E395. Residues S394 and E395 each contribute to the fumarate site. R419 functions as the Proton donor in the catalytic mechanism. H521 provides a ligand contact to fumarate. Position 521 (H521) interacts with succinate. Position 551 (E551) interacts with FAD. Residues R561 and G564 each coordinate fumarate. Residues R561 and G564 each contribute to the succinate site. FAD contacts are provided by G564, A566, and I567.

As to quaternary structure, homodimer. FAD is required as a cofactor. It depends on heme c as a cofactor.

It localises to the periplasm. Flavocytochrome that catalyzes the reduction of fumarate to succinate in vitro. Is essentially unidirectional, catalyzing only fumarate reduction. In vitro, can use the artificial electron donor methyl viologen. May be involved in an alternative route for electron transport to Fe(3+). This chain is Probable fumarate reductase Ifc3, found in Shewanella frigidimarina (strain NCIMB 400).